We begin with the raw amino-acid sequence, 186 residues long: dTTP/UTP pyrophosphatase (186 aa).

Asp-66 serves as the catalytic Proton acceptor.

Belongs to the Maf family. YhdE subfamily. A divalent metal cation is required as a cofactor.

The protein localises to the cytoplasm. The catalysed reaction is dTTP + H2O = dTMP + diphosphate + H(+). It catalyses the reaction UTP + H2O = UMP + diphosphate + H(+). Nucleoside triphosphate pyrophosphatase that hydrolyzes dTTP and UTP. May have a dual role in cell division arrest and in preventing the incorporation of modified nucleotides into cellular nucleic acids. This Pyrococcus horikoshii (strain ATCC 700860 / DSM 12428 / JCM 9974 / NBRC 100139 / OT-3) protein is dTTP/UTP pyrophosphatase.